A 435-amino-acid polypeptide reads, in one-letter code: Trigger factor (435 aa).

The 86-residue stretch at 161–246 (GDKLTLDFTG…IHKTEGPILP (86 aa)) folds into the PPIase FKBP-type domain.

Belongs to the FKBP-type PPIase family. Tig subfamily.

Its subcellular location is the cytoplasm. The catalysed reaction is [protein]-peptidylproline (omega=180) = [protein]-peptidylproline (omega=0). Involved in protein export. Acts as a chaperone by maintaining the newly synthesized protein in an open conformation. Functions as a peptidyl-prolyl cis-trans isomerase. The chain is Trigger factor from Colwellia psychrerythraea (strain 34H / ATCC BAA-681) (Vibrio psychroerythus).